The primary structure comprises 1488 residues: Phenolphthiocerol/phthiocerol polyketide synthase subunit E (1488 aa).

Residues Glu5 to Glu438 enclose the Ketosynthase family 3 (KS3) domain. Residues Cys184, His320, and His361 each act as for beta-ketoacyl synthase activity in the active site. Residues Val551–Val868 are acyltransferase. The For malonyltransferase activity role is filled by Ser641. The region spanning Asn930–Phe1004 is the Carrier domain. An O-(pantetheine 4'-phosphoryl)serine modification is found at Ser965. Glu1286–Leu1331 provides a ligand contact to NADP(+).

It depends on NADP(+) as a cofactor. The cofactor is pantetheine 4'-phosphate.

The catalysed reaction is icosanoyl-[(phenol)carboxyphthiodiolenone synthase] + 2 (S)-methylmalonyl-CoA + 3 malonyl-CoA + 5 NADPH + 10 H(+) = C32-carboxyphthiodiolenone-[(phenol)carboxyphthiodiolenone synthase] + 5 CO2 + 5 NADP(+) + 5 CoA + 2 H2O. It carries out the reaction docosanoyl-[(phenol)carboxyphthiodiolenone synthase] + 2 (S)-methylmalonyl-CoA + 3 malonyl-CoA + 5 NADPH + 10 H(+) = C34-carboxyphthiodiolenone-[(phenol)carboxyphthiodiolenone synthase] + 5 CO2 + 5 NADP(+) + 5 CoA + 2 H2O. It catalyses the reaction 17-(4-hydroxyphenyl)heptadecanoyl-[(phenol)carboxyphthiodiolenone synthase] + 2 (S)-methylmalonyl-CoA + 3 malonyl-CoA + 5 NADPH + 10 H(+) = C35-(phenol)carboxyphthiodiolenone-[(phenol)carboxyphthiodiolenone synthase] + 5 CO2 + 5 NADP(+) + 5 CoA + 2 H2O. The enzyme catalyses 19-(4-hydroxyphenyl)nonadecanoyl-[(phenol)carboxyphthiodiolenone synthase] + 2 (S)-methylmalonyl-CoA + 3 malonyl-CoA + 5 NADPH + 10 H(+) = C37-(phenol)carboxyphthiodiolenone-[(phenol)carboxyphthiodiolenone synthase] + 5 CO2 + 5 NADP(+) + 5 CoA + 2 H2O. Its pathway is lipid metabolism; fatty acid biosynthesis. Its function is as follows. Part of the PpsABCDE complex involved in the biosynthesis of the lipid core common to phthiocerols and phenolphthiocerols by successive additions of malonyl-CoA or methylmalonyl-CoA extender units. PpsA can accept as substrate the activated forms of either icosanoyl (C20), docosanoyl (C22) or lignoceroyl (C24) groups from FadD26, or a (4-hydroxyphenyl)-C17 or (4-hydroxyphenyl)-C19 fatty acyl from FadD29. PpsA initiates the biosynthesis and extends its substrate using a malonyl-CoA extender unit. The PpsB and PpsC proteins add the second and third malonyl-CoA extender units. PpsD adds an (R)-methylmalonyl unit and PpsE adds a second (R)-methylmalonyl unit. The incorporation of the methylmalonyl units results in formation of two branched methyl groups in the elongated product. The polypeptide is Phenolphthiocerol/phthiocerol polyketide synthase subunit E (ppsE) (Mycobacterium bovis (strain ATCC BAA-935 / AF2122/97)).